Here is a 319-residue protein sequence, read N- to C-terminus: Acetyl-coenzyme A carboxylase carboxyl transferase subunit alpha (319 aa).

A CoA carboxyltransferase C-terminal domain is found at 39 to 293 (RLQKKSNDLT…KAVLEKQLHE (255 aa)).

It belongs to the AccA family. As to quaternary structure, acetyl-CoA carboxylase is a heterohexamer composed of biotin carboxyl carrier protein (AccB), biotin carboxylase (AccC) and two subunits each of ACCase subunit alpha (AccA) and ACCase subunit beta (AccD).

The protein localises to the cytoplasm. It catalyses the reaction N(6)-carboxybiotinyl-L-lysyl-[protein] + acetyl-CoA = N(6)-biotinyl-L-lysyl-[protein] + malonyl-CoA. The protein operates within lipid metabolism; malonyl-CoA biosynthesis; malonyl-CoA from acetyl-CoA: step 1/1. Its function is as follows. Component of the acetyl coenzyme A carboxylase (ACC) complex. First, biotin carboxylase catalyzes the carboxylation of biotin on its carrier protein (BCCP) and then the CO(2) group is transferred by the carboxyltransferase to acetyl-CoA to form malonyl-CoA. This chain is Acetyl-coenzyme A carboxylase carboxyl transferase subunit alpha, found in Neisseria meningitidis serogroup C / serotype 2a (strain ATCC 700532 / DSM 15464 / FAM18).